We begin with the raw amino-acid sequence, 336 residues long: N-lysine methyltransferase KMT5A (336 aa).

The tract at residues 1-112 (MGRGKKMSKP…KPSEQRETEC (112 aa)) is disordered. Residues 67–93 (SVAHHESKCPGKPLTETRKKAEVEKKR) show a composition bias toward basic and acidic residues. The SET domain maps to 200 to 321 (EGMKMDMITG…VGEELLYDYG (122 aa)). S-adenosyl-L-methionine-binding positions include 210–212 (KGR), Tyr-255, and 282–283 (NH).

It belongs to the class V-like SAM-binding methyltransferase superfamily. Histone-lysine methyltransferase family. PR/SET subfamily.

Its subcellular location is the nucleus. The protein localises to the chromosome. It carries out the reaction L-lysyl(20)-[histone H4] + S-adenosyl-L-methionine = N(6)-methyl-L-lysyl(20)-[histone H4] + S-adenosyl-L-homocysteine + H(+). The enzyme catalyses L-lysyl-[protein] + S-adenosyl-L-methionine = N(6)-methyl-L-lysyl-[protein] + S-adenosyl-L-homocysteine + H(+). In terms of biological role, protein-lysine N-methyltransferase that monomethylates both histones and non-histone proteins. Specifically monomethylates 'Lys-20' of histone H4 (H4K20me1). H4K20me1 is enriched during mitosis and represents a specific tag for epigenetic transcriptional repression. Mainly functions in euchromatin regions, thereby playing a central role in the silencing of euchromatic genes. Required for cell proliferation, probably by contributing to the maintenance of proper higher-order structure of DNA during mitosis. Involved in chromosome condensation and proper cytokinesis. Nucleosomes are preferred as substrate compared to free histones. Mediates monomethylation of p53/TP53 at 'Lys-382', leading to repress p53/TP53-target genes. Plays a negative role in TGF-beta response regulation and a positive role in cell migration. In Xenopus tropicalis (Western clawed frog), this protein is N-lysine methyltransferase KMT5A.